We begin with the raw amino-acid sequence, 1640 residues long: Basal body protein 10 (1640 aa).

A homodimerization region spans residues 11–64; sequence VLRRKLEALGYSDPLEPASLQLVQKLVEDLVHTTDSYTAVKQQCAKQAQEIAAF. The stretch at 93 to 148 forms a coiled coil; it reads AERHEREAREHYTAVKRLEDTIAELSYWKHAAAEKLASADKENAGLRKRCEELAKL. The segment at 154 to 185 is disordered; the sequence is SGAATPQSVAPKISSRSPIRVAPPPSPPRPRQ. Residues 174–183 show a composition bias toward pro residues; it reads VAPPPSPPRP. 10 coiled-coil regions span residues 191 to 232, 260 to 332, 370 to 411, 461 to 722, 758 to 960, 1010 to 1030, 1059 to 1086, 1129 to 1282, 1323 to 1494, and 1523 to 1557; these read LQAA…RDVE, ILQL…LQDT, VERL…AQSR, FAAL…AEAD, ARQM…AQAA, GEALREELRAVSEDLEALVRE, RASAEQLLRAKEAEAEDLRRVYEALAAE, INQY…LQAS, AKDQ…AERD, and AELASRRLRELQTQVDALEAEKAGLEEATQRTRAT. A compositionally biased stretch (low complexity) spans 1592-1618; that stretch reads GQGQVQGPAGTAPAAAAGAPGPQPGQA. The segment at 1592 to 1640 is disordered; the sequence is GQGQVQGPAGTAPAAAAGAPGPQPGQAQAGGFGGAHGGGSISLSGGPRR. The span at 1619-1631 shows a compositional bias: gly residues; the sequence is QAGGFGGAHGGGS.

This sequence belongs to the CEP135/TSGA10 family. Homodimer.

The protein localises to the cytoplasm. It is found in the cytoskeleton. Its subcellular location is the microtubule organizing center. The protein resides in the centrosome. It localises to the centriole. Its function is as follows. Microtubule-binding protein essential for cytoskeletal organization (e.g. rootlet microtubule bundles) and flagellar basal body/centriole assembly. This Chlamydomonas reinhardtii (Chlamydomonas smithii) protein is Basal body protein 10.